The sequence spans 770 residues: Pheromone-regulated membrane protein 10 (770 aa).

2 disordered regions span residues 1–125 and 139–169; these read MDGR…DGDD and NQGG…RNEE. 2 stretches are compositionally biased toward polar residues: residues 49–63 and 78–93; these read SGKS…NNDN and DLSS…SKGT. Residues 155 to 169 are compositionally biased toward basic and acidic residues; sequence ENGKDDIEKNNRNEE. Helical transmembrane passes span 453-473, 475-495, 505-525, 529-549, 568-588, 604-624, 629-649, 659-679, 681-701, and 740-760; these read WMCV…AFGG, WVNL…QFIL, VFEI…GSIP, ICFG…YIIL, FYAI…SALF, LISP…ISLL, ISQL…TYWA, FTAA…SRIW, GLAV…GIAS, and IQVC…VYPF.

Belongs to the ThrE exporter (TC 2.A.79) family.

The protein localises to the membrane. The sequence is that of Pheromone-regulated membrane protein 10 (PRM10) from Saccharomyces cerevisiae (strain YJM789) (Baker's yeast).